The primary structure comprises 857 residues: DNA mismatch repair protein MutS (857 aa).

608-615 lines the ATP pocket; that stretch reads GPNMSGKS.

It belongs to the DNA mismatch repair MutS family.

In terms of biological role, this protein is involved in the repair of mismatches in DNA. It is possible that it carries out the mismatch recognition step. This protein has a weak ATPase activity. This chain is DNA mismatch repair protein MutS, found in Lactobacillus johnsonii (strain CNCM I-12250 / La1 / NCC 533).